The primary structure comprises 237 residues: uncharacterized protein (237 aa).

Residues 1–28 (MNRPLLSVAGSLFVAAWALYIFSCFQHG) form the signal peptide. Positions 52 to 96 (NARDTAAHPSDTADNTSGSSTTTDPRSHGNAPPAPVGGAAQTHTQ) are disordered. Positions 63–75 (TADNTSGSSTTTD) are enriched in polar residues.

This is an uncharacterized protein from Treponema pallidum (strain Nichols).